Here is a 228-residue protein sequence, read N- to C-terminus: MARERREIKRIESAAARQVTFSKRRRGLFKKAEELSVLCDADVALIVFSSTGKLSHFASSSMNEIIDKYNTHSNNLGKAEQPSLDLNLEHSKYAHLNEQLAEASLRLRQMRGEELEGLSIDELQQLEKNLEAGLHRVMLTKDQQFMEQISELQRKSSQLAEENMQLRNQVSQISPAEKQVVDTENFVTEGQSSESVMTALHSGSSQSQDNDDGSDVSLKLGLPCGAWK.

The 61-residue stretch at 1–61 folds into the MADS-box domain; the sequence is MARERREIKR…GKLSHFASSS (61 aa). The region spanning 86–176 is the K-box domain; sequence LNLEHSKYAH…RNQVSQISPA (91 aa). The disordered stretch occupies residues 189–217; sequence EGQSSESVMTALHSGSSQSQDNDDGSDVS.

As to expression, expressed in palea and stamen primordia. Expressed in shoots and coleoptiles.

It is found in the nucleus. Its function is as follows. Probable transcription factor. May be required for spikelet (rice flower) development. Transcription factor that functions to support the MADS55 in its function as negative regulator of brassinosteroid signaling. The sequence is that of MADS-box transcription factor 22 (MADS22) from Oryza sativa subsp. japonica (Rice).